An 867-amino-acid polypeptide reads, in one-letter code: Nitrate reductase [NADPH] (867 aa).

Residues 38-58 (DIPLPPPSKEPTEVLSIDKPT) are disordered. Residue C152 participates in Mo-molybdopterin binding. A Cytochrome b5 heme-binding domain is found at 514-589 (NRIIDLQEFK…MPDYHIGTMD (76 aa)). Heme contacts are provided by H549 and H572. Residues 615 to 726 (KSWTKATLVK…KGPTGRFEYL (112 aa)) form the FAD-binding FR-type domain. FAD contacts are provided by residues 669 to 672 (RSYT), 686 to 690 (LVKIY), F691, 700 to 702 (KMT), and T753. Position 837-846 (837-846 (MVLICGPEAM)) interacts with NADP(+).

Belongs to the nitrate reductase family. As to quaternary structure, homodimer. FAD is required as a cofactor. Heme serves as cofactor. Requires Mo-molybdopterin as cofactor.

The catalysed reaction is nitrite + NADP(+) + H2O = nitrate + NADPH + H(+). Nitrate reductase is a key enzyme involved in the first step of nitrate assimilation in plants, fungi and bacteria. The protein is Nitrate reductase [NADPH] (niaD) of Aspergillus niger.